A 203-amino-acid chain; its full sequence is Non-histone protein 10 (203 aa).

Position 2 is an N-acetylserine (S2). Disordered stretches follow at residues 78–97 (KSKT…PKRP) and 161–203 (ISNI…VSSN). A DNA-binding region (HMG box) is located at residues 94–158 (PKRPTNAYLL…RYQMEMEIYN (65 aa)).

In terms of assembly, component of the chromatin-remodeling INO80 complex, at least composed of ARP4, ARP5, ARP8, RVB1, RVB2, TAF14, NHP10, IES1, IES3, IES4, IES6, ACT1, IES2, IES5 and INO80.

The protein localises to the nucleus. Probably involved in transcription regulation via its interaction with the INO80 complex, a chromatin remodeling complex. This is Non-histone protein 10 (NHP10) from Saccharomyces cerevisiae (strain ATCC 204508 / S288c) (Baker's yeast).